We begin with the raw amino-acid sequence, 113 residues long: Putative pterin-4-alpha-carbinolamine dehydratase (113 aa).

It belongs to the pterin-4-alpha-carbinolamine dehydratase family.

The enzyme catalyses (4aS,6R)-4a-hydroxy-L-erythro-5,6,7,8-tetrahydrobiopterin = (6R)-L-erythro-6,7-dihydrobiopterin + H2O. The protein is Putative pterin-4-alpha-carbinolamine dehydratase of Bordetella bronchiseptica (strain ATCC BAA-588 / NCTC 13252 / RB50) (Alcaligenes bronchisepticus).